The following is a 149-amino-acid chain: SPbeta prophage-derived putative transcriptional regulator YosT (149 aa).

This Bacillus subtilis (strain 168) protein is SPbeta prophage-derived putative transcriptional regulator YosT (yosT).